The sequence spans 361 residues: NudC domain-containing protein 3 (361 aa).

The span at 87-97 (KIRRKEEEEAK) shows a compositional bias: basic and acidic residues. 2 disordered regions span residues 87–106 (KIRR…AAEK) and 124–158 (LDGH…VAGA). Phosphoserine is present on S146. Low complexity predominate over residues 148 to 158 (EAEAPGAVAGA). One can recognise a CS domain in the interval 185 to 277 (AVRENYTWSQ…VGEYWWNAIL (93 aa)). Residues S340 and S355 each carry the phosphoserine modification.

The protein is NudC domain-containing protein 3 (NUDCD3) of Homo sapiens (Human).